Consider the following 847-residue polypeptide: DNA mismatch repair protein MutS (847 aa).

ATP is bound at residue 602–609; the sequence is GPNMSGKS. A disordered region spans residues 788–807; sequence EKREASLPASRTDSQKVSEQ. Polar residues predominate over residues 796-807; the sequence is ASRTDSQKVSEQ.

The protein belongs to the DNA mismatch repair MutS family.

This protein is involved in the repair of mismatches in DNA. It is possible that it carries out the mismatch recognition step. This protein has a weak ATPase activity. This is DNA mismatch repair protein MutS from Streptococcus gordonii (strain Challis / ATCC 35105 / BCRC 15272 / CH1 / DL1 / V288).